A 1230-amino-acid polypeptide reads, in one-letter code: Potassium channel subfamily T member 1 (1230 aa).

Residues 1–37 (MARAKLPRSPSEGKAGPGGAPAGAAAPEEPHGLSPLL) form a disordered region. The Cytoplasmic portion of the chain corresponds to 1–93 (MARAKLPRSP…LFFIKNQRSS (93 aa)). Residues 94–126 (LRIRLFNFSLKLLTCLLYIVRVLLDDPALGIGC) traverse the membrane as a helical segment. Residues 127–153 (WGCPKQNYSFNDSSSEINWAPILWVER) lie on the Extracellular side of the membrane. N-linked (GlcNAc...) asparagine glycosylation is found at N133 and N137. Residues 154–178 (KMTLWAIQVIVAIISFLETMLLIYL) traverse the membrane as a helical segment. Residues 179 to 192 (SYKGNIWEQIFRVS) are Cytoplasmic-facing. The helical transmembrane segment at 193 to 208 (FVLEMINTLPFIITIF) threads the bilayer. Residues 209–215 (WPPLRNL) lie on the Extracellular side of the membrane. The chain crosses the membrane as a helical span at residues 216–233 (FIPVFLNCWLAKHALENM). Over 234–246 (INDFHRAILRTQS) the chain is Cytoplasmic. A helical transmembrane segment spans residues 247–274 (AMFNQVLILFCTLLCLVFTGTCGIQHLE). The Extracellular segment spans residues 275–281 (RAGENLS). Residues 282–302 (LLTSFYFCIVTFSTVGYGDVT) constitute an intramembrane region (pore-forming). Residues V296 and G297 each coordinate K(+). Topologically, residues 303–304 (PK) are extracellular. Residues 305 to 338 (IWPSQLLVVIMICVALVVLPLQFEELVYLWMERQ) form a helical membrane-spanning segment. Topologically, residues 339-1230 (KSGGNYSRHR…NPETRDETQL (892 aa)) are cytoplasmic. The 137-residue stretch at 352–488 (EKHVVLCVSS…FHVKFADHVV (137 aa)) folds into the RCK N-terminal 1 domain. Na(+)-binding residues include L513, H516, S538, and N540. Residues 660–689 (TEHRPTQSGGGGGGSKLALPTENGSGSRRP) form a disordered region. The Zn(2+) site is built by C758 and C759. Residues R761 and K764 each contribute to the K(+) site. Na(+) is bound by residues R761 and K764. Zn(2+) contacts are provided by C766 and H768. Residues N769, Y771, Y777, and G778 each coordinate K(+). A Na(+)-binding site is contributed by Y771. F779 is a Na(+) binding site. The RCK N-terminal 2 domain occupies 781 to 921 (NKLIIVSAET…QFRAKDSYSL (141 aa)). Residues S787, L818, D820, G842, and D865 each coordinate K(+). Disordered stretches follow at residues 1048-1078 (EVKGPWGSRAGTGGSSQGRHTGGGDPAEHPL) and 1204-1230 (SSSQSRKSSCSHKLSSCNPETRDETQL). Over residues 1057-1072 (AGTGGSSQGRHTGGGD) the composition is skewed to gly residues. Residues 1204–1219 (SSSQSRKSSCSHKLSS) show a composition bias toward low complexity.

Belongs to the potassium channel family. Calcium-activated (TC 1.A.1.3) subfamily. KCa4.1/KCNT1 sub-subfamily. In terms of assembly, homotetramer; which constitutes the Na(+)-activated K(+) channel. Interacts with KCNT2; these heterodimer channels differ from the homomers in their unitary conductance, kinetic behavior, subcellular localization, and response to activation of protein kinase C. Interacts (via C-terminus) with FMR1; this interaction alters gating properties of KCNT1. Interacts with CRBN via its cytoplasmic C-terminus. Phosphorylated by protein kinase C. Phosphorylation of the C-terminal domain increases channel activity. As to expression, highest expression in liver, brain and spinal cord. Lowest expression in skeletal muscle.

The protein resides in the cell membrane. The catalysed reaction is K(+)(in) = K(+)(out). Its activity is regulated as follows. Activated by high intracellular Na(+). In addition to activation by Na(+), is cooperatively activated by intracellular Cl(-) levels. Inhibited by Zn(2+). Activated upon stimulation of G-protein coupled receptors, such as CHRM1 and GRIA1. Functionally, sodium-activated K(+) channel. Acts as an important mediator of neuronal membrane excitability. Contributes to the delayed outward currents. Regulates neuronal bursting in sensory neurons. Contributes to synaptic development and plasticity. This is Potassium channel subfamily T member 1 from Homo sapiens (Human).